A 295-amino-acid chain; its full sequence is Shikimate dehydrogenase (NADP(+)) (295 aa).

Shikimate contacts are provided by residues 21 to 23 and Thr-68; that span reads SLS. Lys-72 serves as the catalytic Proton acceptor. Positions 93 and 108 each coordinate shikimate. NADP(+) contacts are provided by residues 132–136, 156–161, and Leu-228; these read GAGGA and NRTPER. Tyr-230 serves as a coordination point for shikimate. Gly-251 contacts NADP(+).

The protein belongs to the shikimate dehydrogenase family. As to quaternary structure, homodimer.

The enzyme catalyses shikimate + NADP(+) = 3-dehydroshikimate + NADPH + H(+). The protein operates within metabolic intermediate biosynthesis; chorismate biosynthesis; chorismate from D-erythrose 4-phosphate and phosphoenolpyruvate: step 4/7. In terms of biological role, involved in the biosynthesis of the chorismate, which leads to the biosynthesis of aromatic amino acids. Catalyzes the reversible NADPH linked reduction of 3-dehydroshikimate (DHSA) to yield shikimate (SA). This is Shikimate dehydrogenase (NADP(+)) from Moorella thermoacetica (strain ATCC 39073 / JCM 9320).